The chain runs to 132 residues: MPTISQLIRQGREAARYKTASPALKSCPQRRGVCVRVYTTTPKKPNSALRKVCRVRLSNQMEVTSYIPGEGHNLQEHSVVLIRGGRVKDLPGVRYHVVRGTLDASGAAGPSSTNKATRNRKRSKYGVKRPKA.

Asp-89 bears the 3-methylthioaspartic acid mark. Residues 101-132 (TLDASGAAGPSSTNKATRNRKRSKYGVKRPKA) form a disordered region. Positions 117–132 (TRNRKRSKYGVKRPKA) are enriched in basic residues.

The protein belongs to the universal ribosomal protein uS12 family. As to quaternary structure, part of the 30S ribosomal subunit. Contacts proteins S8 and S17. May interact with IF1 in the 30S initiation complex.

With S4 and S5 plays an important role in translational accuracy. Functionally, interacts with and stabilizes bases of the 16S rRNA that are involved in tRNA selection in the A site and with the mRNA backbone. Located at the interface of the 30S and 50S subunits, it traverses the body of the 30S subunit contacting proteins on the other side and probably holding the rRNA structure together. The combined cluster of proteins S8, S12 and S17 appears to hold together the shoulder and platform of the 30S subunit. This chain is Small ribosomal subunit protein uS12, found in Sorangium cellulosum (strain So ce56) (Polyangium cellulosum (strain So ce56)).